Here is a 599-residue protein sequence, read N- to C-terminus: Kelch repeat and BTB domain-containing protein 8 (599 aa).

The segment at 1–25 is disordered; it reads MAASADLSKSSPTPNGIPSSDTAND. The segment covering 7–25 has biased composition (polar residues); sequence LSKSSPTPNGIPSSDTAND. Residues 49–117 enclose the BTB domain; that stretch reads TDIVVEVDHG…AYTSRVILTE (69 aa). The BACK domain maps to 152-254; that stretch reads SIGVFIFADH…MEDTFIEKIP (103 aa). Kelch repeat units follow at residues 334-388, 389-439, 441-479, 481-530, and 540-586; these read DIYI…YCCG, KMYA…EHKE, IYVLQGEFFLFYEPQKDYWGFLTPMTVPRIQGLAAVYKD, IYYI…LFQN, and QVTV…FECA.

Belongs to the KBTBD8 family. As to quaternary structure, component of the BCR(KBTBD8) E3 ubiquitin ligase complex, at least composed of CUL3, KBTBD8 and RBX1.

It is found in the cytoplasm. Its subcellular location is the cytoskeleton. The protein resides in the spindle. It localises to the golgi apparatus. Substrate-specific adapter of a BCR (BTB-CUL3-RBX1) E3 ubiquitin ligase complex that acts as a regulator of neural crest specification. The BCR(KBTBD8) complex acts by mediating monoubiquitination of NOLC1 and TCOF1: monoubiquitination promotes the formation of a NOLC1-TCOF1 complex that acts as a platform to connect RNA polymerase I with enzymes responsible for ribosomal processing and modification, leading to remodel the translational program of differentiating cells in favor of neural crest specification. The sequence is that of Kelch repeat and BTB domain-containing protein 8 (Kbtbd8) from Mus musculus (Mouse).